The sequence spans 182 residues: MAQDPNHLIWLDMEMTGLEPDRDRIIEIALVITDSQLNTIAEAPVIAVHQPESVLDAMDDWNKNTHGKSGLIDRVRASTVSEAEAEARMLAFLQEWVPARTSPMCGNSICQDRRFLARYMPAFEAWFHYRNLDVSTLKELAKRWRPEVYKGVDKKGKHEALADIHESIGELRHYRDNFLRLA.

The Exonuclease domain maps to 8–171 (LIWLDMEMTG…ADIHESIGEL (164 aa)). The active site involves Tyr129.

Belongs to the oligoribonuclease family.

It localises to the cytoplasm. 3'-to-5' exoribonuclease specific for small oligoribonucleotides. This is Oligoribonuclease from Azoarcus sp. (strain BH72).